Reading from the N-terminus, the 283-residue chain is Co-chaperone protein DjlA (283 aa).

Topologically, residues 1 to 6 (MQIFGK) are periplasmic. Residues 7-30 (ILGGFFGFLFGGFFGAALGIFIGH) traverse the membrane as a helical segment. At 31–283 (QFDKAKRMAN…DLIKKEKGIK (253 aa)) the chain is on the cytoplasmic side. Gly residues predominate over residues 188–197 (QGGGFSGHQS). Positions 188–210 (QGGGFSGHQSGGSHQQGQWQQAS) are disordered. Positions 198–210 (GGSHQQGQWQQAS) are enriched in low complexity. One can recognise a J domain in the interval 217 to 283 (DAYNLLGISE…DLIKKEKGIK (67 aa)).

In terms of assembly, homodimer.

The protein localises to the cell inner membrane. In terms of biological role, regulatory DnaK co-chaperone. Direct interaction between DnaK and DjlA is needed for the induction of the wcaABCDE operon, involved in the synthesis of a colanic acid polysaccharide capsule, possibly through activation of the RcsB/RcsC phosphotransfer signaling pathway. The colanic acid capsule may help the bacterium survive conditions outside the host. In Aliivibrio fischeri (strain ATCC 700601 / ES114) (Vibrio fischeri), this protein is Co-chaperone protein DjlA.